The chain runs to 81 residues: ATP synthase subunit c, chloroplastic (81 aa).

Transmembrane regions (helical) follow at residues 3 to 23 (PLIAAASVIAAGLAVGLASIG) and 57 to 77 (LAFMEALTIYGLVVALALLFA).

It belongs to the ATPase C chain family. As to quaternary structure, F-type ATPases have 2 components, F(1) - the catalytic core - and F(0) - the membrane proton channel. F(1) has five subunits: alpha(3), beta(3), gamma(1), delta(1), epsilon(1). F(0) has four main subunits: a(1), b(1), b'(1) and c(10-14). The alpha and beta chains form an alternating ring which encloses part of the gamma chain. F(1) is attached to F(0) by a central stalk formed by the gamma and epsilon chains, while a peripheral stalk is formed by the delta, b and b' chains.

It localises to the plastid. The protein localises to the chloroplast thylakoid membrane. In terms of biological role, f(1)F(0) ATP synthase produces ATP from ADP in the presence of a proton or sodium gradient. F-type ATPases consist of two structural domains, F(1) containing the extramembraneous catalytic core and F(0) containing the membrane proton channel, linked together by a central stalk and a peripheral stalk. During catalysis, ATP synthesis in the catalytic domain of F(1) is coupled via a rotary mechanism of the central stalk subunits to proton translocation. Key component of the F(0) channel; it plays a direct role in translocation across the membrane. A homomeric c-ring of between 10-14 subunits forms the central stalk rotor element with the F(1) delta and epsilon subunits. The sequence is that of ATP synthase subunit c, chloroplastic from Agrostis stolonifera (Creeping bentgrass).